The chain runs to 165 residues: Nucleotide-binding protein Pro_0479 (165 aa).

This sequence belongs to the YajQ family.

In terms of biological role, nucleotide-binding protein. In Prochlorococcus marinus (strain SARG / CCMP1375 / SS120), this protein is Nucleotide-binding protein Pro_0479.